The following is a 379-amino-acid chain: Homoserine O-succinyltransferase (379 aa).

The 310-residue stretch at 51-360 (NAVLICHALS…DAPQGHDAFL (310 aa)) folds into the AB hydrolase-1 domain. Ser-157 functions as the Nucleophile in the catalytic mechanism. Arg-227 contributes to the substrate binding site. Residues Asp-323 and His-356 contribute to the active site. Asp-357 provides a ligand contact to substrate.

This sequence belongs to the AB hydrolase superfamily. MetX family. Homodimer.

Its subcellular location is the cytoplasm. It carries out the reaction L-homoserine + succinyl-CoA = O-succinyl-L-homoserine + CoA. It participates in amino-acid biosynthesis; L-methionine biosynthesis via de novo pathway; O-succinyl-L-homoserine from L-homoserine: step 1/1. Its function is as follows. Transfers a succinyl group from succinyl-CoA to L-homoserine, forming succinyl-L-homoserine. The chain is Homoserine O-succinyltransferase from Pseudomonas aeruginosa (strain LESB58).